The chain runs to 557 residues: MFS-type transporter clz4 (557 aa).

14 helical membrane passes run 22–42 (LIIV…DHNG), 59–79 (SITW…VLYG), 89–109 (ALFV…GFAT), 120–140 (LTGA…TDVV), 150–170 (AVVA…AAGV), 179–199 (GLFW…GYIL), 217–237 (WLGS…VSGP), 245–265 (SLLV…FLFI), 269–289 (LATL…SALL), 319–339 (VISG…SMIA), 346–366 (SGQY…GSLL), 379–399 (VIIV…PMVI), 419–439 (FFRF…LQST), and 479–499 (HVYI…FVWK). Over residues 505–523 (SRPTENNDDIEHAPARGIE) the composition is skewed to basic and acidic residues. Residues 505-557 (SRPTENNDDIEHAPARGIEREDEQSSLIYDREPSAVSYGTVEAGEPNRLRRGG) form a disordered region.

It belongs to the major facilitator superfamily. TCR/Tet family.

It is found in the membrane. MFS-type transporter; part of the gene cluster that mediates the biosynthesis of squalestatin S1 (SQS1, also known as zaragozic acid A), a heavily oxidized fungal polyketide that offers potent cholesterol lowering activity by targeting squalene synthase (SS). In Cochliobolus lunatus (Filamentous fungus), this protein is MFS-type transporter clz4.